The sequence spans 294 residues: 4-hydroxy-tetrahydrodipicolinate synthase (294 aa).

Threonine 47 contacts pyruvate. The active-site Proton donor/acceptor is the tyrosine 136. The Schiff-base intermediate with substrate role is filled by lysine 164. Valine 206 serves as a coordination point for pyruvate.

The protein belongs to the DapA family. In terms of assembly, homotetramer; dimer of dimers.

It is found in the cytoplasm. The catalysed reaction is L-aspartate 4-semialdehyde + pyruvate = (2S,4S)-4-hydroxy-2,3,4,5-tetrahydrodipicolinate + H2O + H(+). The protein operates within amino-acid biosynthesis; L-lysine biosynthesis via DAP pathway; (S)-tetrahydrodipicolinate from L-aspartate: step 3/4. Its function is as follows. Catalyzes the condensation of (S)-aspartate-beta-semialdehyde [(S)-ASA] and pyruvate to 4-hydroxy-tetrahydrodipicolinate (HTPA). The sequence is that of 4-hydroxy-tetrahydrodipicolinate synthase from Nostoc sp. (strain PCC 7120 / SAG 25.82 / UTEX 2576).